Reading from the N-terminus, the 288-residue chain is ATP synthase gamma chain (288 aa).

The protein belongs to the ATPase gamma chain family. In terms of assembly, F-type ATPases have 2 components, CF(1) - the catalytic core - and CF(0) - the membrane proton channel. CF(1) has five subunits: alpha(3), beta(3), gamma(1), delta(1), epsilon(1). CF(0) has three main subunits: a, b and c.

The protein localises to the cell inner membrane. Functionally, produces ATP from ADP in the presence of a proton gradient across the membrane. The gamma chain is believed to be important in regulating ATPase activity and the flow of protons through the CF(0) complex. In Rickettsia bellii (strain OSU 85-389), this protein is ATP synthase gamma chain.